A 541-amino-acid chain; its full sequence is Chaperonin GroEL (541 aa).

Residues 29–32 (TLGP), 86–90 (DGTTT), Gly-413, 476–478 (NAA), and Asp-492 contribute to the ATP site.

This sequence belongs to the chaperonin (HSP60) family. As to quaternary structure, forms a cylinder of 14 subunits composed of two heptameric rings stacked back-to-back. Interacts with the co-chaperonin GroES.

The protein resides in the cytoplasm. The enzyme catalyses ATP + H2O + a folded polypeptide = ADP + phosphate + an unfolded polypeptide.. Its function is as follows. Together with its co-chaperonin GroES, plays an essential role in assisting protein folding. The GroEL-GroES system forms a nano-cage that allows encapsulation of the non-native substrate proteins and provides a physical environment optimized to promote and accelerate protein folding. The protein is Chaperonin GroEL of Rhodococcus hoagii (Corynebacterium equii).